The primary structure comprises 373 residues: 4-hydroxy-3-methylbut-2-en-1-yl diphosphate synthase (flavodoxin) (373 aa).

The [4Fe-4S] cluster site is built by Cys270, Cys273, Cys305, and Glu312.

This sequence belongs to the IspG family. It depends on [4Fe-4S] cluster as a cofactor.

It carries out the reaction (2E)-4-hydroxy-3-methylbut-2-enyl diphosphate + oxidized [flavodoxin] + H2O + 2 H(+) = 2-C-methyl-D-erythritol 2,4-cyclic diphosphate + reduced [flavodoxin]. It participates in isoprenoid biosynthesis; isopentenyl diphosphate biosynthesis via DXP pathway; isopentenyl diphosphate from 1-deoxy-D-xylulose 5-phosphate: step 5/6. Its function is as follows. Converts 2C-methyl-D-erythritol 2,4-cyclodiphosphate (ME-2,4cPP) into 1-hydroxy-2-methyl-2-(E)-butenyl 4-diphosphate. The sequence is that of 4-hydroxy-3-methylbut-2-en-1-yl diphosphate synthase (flavodoxin) from Photobacterium profundum (strain SS9).